A 441-amino-acid chain; its full sequence is 5-hydroxytryptamine receptor 3B (441 aa).

A signal peptide spans 1 to 21 (MLSSVMAPLWACILVAAGILA). Topologically, residues 22 to 238 (TDTHHPQDSA…IQFNVVMRRH (217 aa)) are extracellular. Residues asparagine 52, asparagine 96, asparagine 138, asparagine 168, and asparagine 203 are each glycosylated (N-linked (GlcNAc...) asparagine). Cysteine 155 and cysteine 169 are oxidised to a cystine. A helical transmembrane segment spans residues 239–259 (PLVYVVSLLIPSIFLMLVDLG). Residues 260-268 (SFYLPPNCR) are Cytoplasmic-facing. The chain crosses the membrane as a helical span at residues 269–286 (ARIVFKTSVLVGYTVFRV). Asparagine 287 carries an N-linked (GlcNAc...) asparagine glycan. Over 287-303 (NMSNQVPRSVGSTPLIG) the chain is Extracellular. A helical membrane pass occupies residues 304-324 (HFFTICMAFLVLSLAKSIVLV). Residues 325-414 (KFLHDEQRGG…WLVLLSRFDR (90 aa)) are Cytoplasmic-facing. The segment at 381 to 413 (VWSQLQSISNYLQTQDQTDQQEAEWLVLLSRFD) is HA-stretch; determines single-channel conductance in 5-HT3 receptors. A helical membrane pass occupies residues 415 to 435 (LLFQSYLFMLGIYTITLCSLW). At 436–441 (ALWGGV) the chain is on the extracellular side.

This sequence belongs to the ligand-gated ion channel (TC 1.A.9) family. 5-hydroxytryptamine receptor (TC 1.A.9.2) subfamily. HTR3B sub-subfamily. As to quaternary structure, forms homopentameric as well as heteropentameric serotonin-activated cation-selective channel complexes with HTR3A. The homomeric complex is not functional. Heteropentameric complexes display properties which resemble that of neuronal serotonin-activated channels in vivo. In terms of processing, N-glycosylation required for membrane localization. In terms of tissue distribution, expressed in the brain cortex, in the caudate nucleus, the hippocampus, the thalamus and the amygdala. Detected in the kidney and testis as well as in monocytes of the spleen, small and large intestine, uterus, prostate, ovary and placenta.

The protein localises to the postsynaptic cell membrane. It localises to the cell membrane. The catalysed reaction is Na(+)(in) = Na(+)(out). The enzyme catalyses K(+)(in) = K(+)(out). It catalyses the reaction Ca(2+)(in) = Ca(2+)(out). Its function is as follows. Forms serotonin (5-hydroxytryptamine/5-HT3)-activated cation-selective channel complexes, which when activated cause fast, depolarizing responses in neurons. The sequence is that of 5-hydroxytryptamine receptor 3B from Homo sapiens (Human).